The primary structure comprises 93 residues: Small ribosomal subunit protein uS19 (93 aa).

2 disordered regions span residues 1–24 (MPRS…AQNE) and 73–93 (EFAP…GRRR). Basic and acidic residues-rich tracts occupy residues 9–21 (PFVD…KVDA) and 81–93 (KGHE…GRRR).

This sequence belongs to the universal ribosomal protein uS19 family.

Its function is as follows. Protein S19 forms a complex with S13 that binds strongly to the 16S ribosomal RNA. This chain is Small ribosomal subunit protein uS19, found in Kineococcus radiotolerans (strain ATCC BAA-149 / DSM 14245 / SRS30216).